The chain runs to 162 residues: Phosphopantetheine adenylyltransferase (162 aa).

Ser11 contacts substrate. ATP-binding positions include 11 to 12 (SF) and His19. Substrate contacts are provided by Lys43, Val76, and Arg90. ATP is bound by residues 91–93 (GLR), Glu101, and 126–132 (HLYISSS).

It belongs to the bacterial CoaD family. Homohexamer. Mg(2+) serves as cofactor.

The protein localises to the cytoplasm. The enzyme catalyses (R)-4'-phosphopantetheine + ATP + H(+) = 3'-dephospho-CoA + diphosphate. The protein operates within cofactor biosynthesis; coenzyme A biosynthesis; CoA from (R)-pantothenate: step 4/5. Its function is as follows. Reversibly transfers an adenylyl group from ATP to 4'-phosphopantetheine, yielding dephospho-CoA (dPCoA) and pyrophosphate. The chain is Phosphopantetheine adenylyltransferase from Streptococcus pneumoniae (strain Hungary19A-6).